We begin with the raw amino-acid sequence, 570 residues long: MEEKDVYTQDGTVDIHKNPANKEKTGNWKACRFILGNECCERLAYYGMGTNLVNYLESRLNQGNATAANNVTNWSGTCYITPLIGAFIADAYLGRYWTIATFVFIYVSGMTLLTLSASVPGLKPGNCNADTCHPNSSQTAVFFVALYMIALGTGGIKPCVSSFGADQFDENDENEKIKKSSFFNWFYFSINVGALIAATVLVWIQMNVGWGWGFGVPTVAMVIAVCFFFFGSRFYRLQRPGGSPLTRIFQVIVAAFRKISVKVPEDKSLLFETADDESNIKGSRKLVHTDNLKFFDKAAVESQSDSIKDGEVNPWRLCSVTQVEELKSIITLLPVWATGIVFATVYSQMSTMFVLQGNTMDQHMGKNFEIPSASLSLFDTVSVLFWTPVYDQFIIPLARKFTRNERGFTQLQRMGIGLVVSIFAMITAGVLEVVRLDYVKTHNAYDQKQIHMSIFWQIPQYLLIGCAEVFTFIGQLEFFYDQAPDAMRSLCSALSLTTVALGNYLSTVLVTVVMKITKKNGKPGWIPDNLNRGHLDYFFYLLATLSFLNFLVYLWISKRYKYKKAVGRAH.

T98 carries the post-translational modification Phosphothreonine. 10 consecutive transmembrane segments (helical) span residues 99-119 (IATF…SASV), 140-160 (AVFF…KPCV), 182-202 (FFNW…TVLV), 210-230 (WGWG…FFFF), 329-349 (IITL…YSQM), 377-397 (LFDT…IIPL), 414-434 (MGIG…LEVV), 454-474 (IFWQ…TFIG), 494-514 (LSLT…TVVM), and 537-557 (YFFY…LWIS).

It belongs to the major facilitator superfamily. Proton-dependent oligopeptide transporter (POT/PTR) (TC 2.A.17) family. As to expression, expressed in cotyledons, hypocotyls, leaves, roots, flowers, pistils and vascular tissue of sepals, anthers, carpels and funiculi. Not detected in seeds.

It is found in the cell membrane. In terms of biological role, peptide transporter. Mediates the transport of di- and tripeptides. High affinity transporter with low selectivity. No transport of amino acids. The sequence is that of Protein NRT1/ PTR FAMILY 8.1 (NPF8.1) from Arabidopsis thaliana (Mouse-ear cress).